The chain runs to 341 residues: L-threonine 3-dehydrogenase (341 aa).

Cys38 provides a ligand contact to Zn(2+). Active-site charge relay system residues include Thr40 and His43. Positions 63, 64, 93, 96, 99, and 107 each coordinate Zn(2+). NAD(+) contacts are provided by residues Ile175, Asp195, Arg200, 262–264 (LGI), and 286–287 (IY).

This sequence belongs to the zinc-containing alcohol dehydrogenase family. Homotetramer. Zn(2+) serves as cofactor.

The protein localises to the cytoplasm. It carries out the reaction L-threonine + NAD(+) = (2S)-2-amino-3-oxobutanoate + NADH + H(+). Its pathway is amino-acid degradation; L-threonine degradation via oxydo-reductase pathway; glycine from L-threonine: step 1/2. Functionally, catalyzes the NAD(+)-dependent oxidation of L-threonine to 2-amino-3-ketobutyrate. The sequence is that of L-threonine 3-dehydrogenase from Cronobacter sakazakii (strain ATCC BAA-894) (Enterobacter sakazakii).